A 624-amino-acid polypeptide reads, in one-letter code: Pentatricopeptide repeat-containing protein At4g31070, mitochondrial (624 aa).

The N-terminal 15 residues, 1 to 15, are a transit peptide targeting the mitochondrion; it reads MRWVKLGRRVIMSRA. PPR repeat units lie at residues 56–91, 92–122, 123–157, 158–192, 195–225, 226–260, 261–296, 297–327, 328–362, 363–397, 398–428, 429–463, 464–498, and 499–529; these read FTAI…GADC, DTVV…MLHR, DTVS…GFIP, KSEL…DERM, SVLL…MEVK, NEVS…NLRP, NRVT…GCHA, DERL…SKVR, DVVM…GIEA, NSVT…GFMS, HILL…LTEK, DLVS…GHEV, DDMA…HMPV, and TLEH…MPMK. The interval 534–610 is type E motif; sequence IWSSLLSACE…CYGFSKIEPE (77 aa).

Belongs to the PPR family. PCMP-E subfamily.

It localises to the mitochondrion. In Arabidopsis thaliana (Mouse-ear cress), this protein is Pentatricopeptide repeat-containing protein At4g31070, mitochondrial (PCMP-E7).